The following is a 454-amino-acid chain: Bifunctional protein GlmU (454 aa).

Residues 1–226 (MTTTVIILAA…AFEVEGVNDR (226 aa)) form a pyrophosphorylase region. Residues 8–11 (LAAG), Lys22, Gln73, 78–79 (GT), 100–102 (YGD), Gly137, Glu151, Asn166, and Asn224 each bind UDP-N-acetyl-alpha-D-glucosamine. Position 102 (Asp102) interacts with Mg(2+). Asn224 provides a ligand contact to Mg(2+). Residues 227 to 247 (LQLAALEREFQLQQAKSLMQQ) form a linker region. The segment at 248–454 (GVTLTDPSRF…NYQRPQKLKK (207 aa)) is N-acetyltransferase. Residues Arg330 and Lys348 each coordinate UDP-N-acetyl-alpha-D-glucosamine. Catalysis depends on His360, which acts as the Proton acceptor. Positions 363 and 374 each coordinate UDP-N-acetyl-alpha-D-glucosamine. Acetyl-CoA contacts are provided by residues Ala377, 383–384 (NY), Ser402, Ala420, and Arg437.

This sequence in the N-terminal section; belongs to the N-acetylglucosamine-1-phosphate uridyltransferase family. The protein in the C-terminal section; belongs to the transferase hexapeptide repeat family. Homotrimer. Mg(2+) is required as a cofactor.

It localises to the cytoplasm. The catalysed reaction is alpha-D-glucosamine 1-phosphate + acetyl-CoA = N-acetyl-alpha-D-glucosamine 1-phosphate + CoA + H(+). It carries out the reaction N-acetyl-alpha-D-glucosamine 1-phosphate + UTP + H(+) = UDP-N-acetyl-alpha-D-glucosamine + diphosphate. Its pathway is nucleotide-sugar biosynthesis; UDP-N-acetyl-alpha-D-glucosamine biosynthesis; N-acetyl-alpha-D-glucosamine 1-phosphate from alpha-D-glucosamine 6-phosphate (route II): step 2/2. It participates in nucleotide-sugar biosynthesis; UDP-N-acetyl-alpha-D-glucosamine biosynthesis; UDP-N-acetyl-alpha-D-glucosamine from N-acetyl-alpha-D-glucosamine 1-phosphate: step 1/1. The protein operates within bacterial outer membrane biogenesis; LPS lipid A biosynthesis. In terms of biological role, catalyzes the last two sequential reactions in the de novo biosynthetic pathway for UDP-N-acetylglucosamine (UDP-GlcNAc). The C-terminal domain catalyzes the transfer of acetyl group from acetyl coenzyme A to glucosamine-1-phosphate (GlcN-1-P) to produce N-acetylglucosamine-1-phosphate (GlcNAc-1-P), which is converted into UDP-GlcNAc by the transfer of uridine 5-monophosphate (from uridine 5-triphosphate), a reaction catalyzed by the N-terminal domain. The chain is Bifunctional protein GlmU from Acinetobacter baylyi (strain ATCC 33305 / BD413 / ADP1).